Here is a 283-residue protein sequence, read N- to C-terminus: 2-dehydro-3-deoxyphosphooctonate aldolase (283 aa).

Belongs to the KdsA family.

Its subcellular location is the cytoplasm. It carries out the reaction D-arabinose 5-phosphate + phosphoenolpyruvate + H2O = 3-deoxy-alpha-D-manno-2-octulosonate-8-phosphate + phosphate. The protein operates within carbohydrate biosynthesis; 3-deoxy-D-manno-octulosonate biosynthesis; 3-deoxy-D-manno-octulosonate from D-ribulose 5-phosphate: step 2/3. Its pathway is bacterial outer membrane biogenesis; lipopolysaccharide biosynthesis. In Methylococcus capsulatus (strain ATCC 33009 / NCIMB 11132 / Bath), this protein is 2-dehydro-3-deoxyphosphooctonate aldolase.